A 315-amino-acid chain; its full sequence is Methionyl-tRNA formyltransferase (315 aa).

Residue 113 to 116 participates in (6S)-5,6,7,8-tetrahydrofolate binding; it reads SLLP.

The protein belongs to the Fmt family.

The enzyme catalyses L-methionyl-tRNA(fMet) + (6R)-10-formyltetrahydrofolate = N-formyl-L-methionyl-tRNA(fMet) + (6S)-5,6,7,8-tetrahydrofolate + H(+). Its function is as follows. Attaches a formyl group to the free amino group of methionyl-tRNA(fMet). The formyl group appears to play a dual role in the initiator identity of N-formylmethionyl-tRNA by promoting its recognition by IF2 and preventing the misappropriation of this tRNA by the elongation apparatus. The polypeptide is Methionyl-tRNA formyltransferase (Pectobacterium carotovorum subsp. carotovorum (strain PC1)).